Reading from the N-terminus, the 305-residue chain is uncharacterized protein (305 aa).

Residues 267 to 287 (ADEQEKNWNGGAKKNARAEPA) form a disordered region.

Belongs to the DnaB/DnaD family.

This is an uncharacterized protein from Listeria innocua serovar 6a (strain ATCC BAA-680 / CLIP 11262).